Reading from the N-terminus, the 290-residue chain is Appressoria-specific virulence factor GAS2 (290 aa).

The signal sequence occupies residues 1–19 (MKYTSAILISAFAATNVFA). A glycan (N-linked (GlcNAc...) asparagine) is linked at asparagine 99. The segment at 121–140 (LPRAGGGTSTPKGTEETGVK) is disordered.

The protein resides in the cytoplasm. Functionally, appressoria-specific virulence factor required for appressorial penetration in host and lesion development. In Pyricularia oryzae (strain 70-15 / ATCC MYA-4617 / FGSC 8958) (Rice blast fungus), this protein is Appressoria-specific virulence factor GAS2.